The chain runs to 73 residues: uncharacterized protein (73 aa).

This is an uncharacterized protein from Caprine arthritis encephalitis virus (CAEV).